We begin with the raw amino-acid sequence, 415 residues long: Multidrug resistance protein MdtA (415 aa).

The N-terminal stretch at 1–21 is a signal peptide; that stretch reads MKGSYKSRWVIVIVVVIAAIA. The span at 31–47 shows a compositional bias: polar residues; it reads DSQSAAPGATKQAQQSP. Disordered stretches follow at residues 31 to 60 and 392 to 415; these read DSQS…GPLA and EAQS…GARS. Residues 399 to 415 show a composition bias toward basic and acidic residues; the sequence is SEEKATSREYAKKGARS.

Belongs to the membrane fusion protein (MFP) (TC 8.A.1) family. In terms of assembly, part of a tripartite efflux system composed of MdtA, MdtB and MdtC.

Its subcellular location is the cell inner membrane. In terms of biological role, the MdtABC tripartite complex confers resistance against novobiocin and deoxycholate. In Escherichia coli O139:H28 (strain E24377A / ETEC), this protein is Multidrug resistance protein MdtA.